The chain runs to 679 residues: NADPH--cytochrome P450 reductase (679 aa).

Over 1–21 (MADSHGDTGATMPEAAAQEAS) the chain is Lumenal. Residues 22-42 (VFSMTDVVLFSLIVGLITYWF) traverse the membrane as a helical segment. Over 43 to 679 (LFRKKKEEVP…KGRYSLDVWS (637 aa)) the chain is Cytoplasmic. S64 carries the phosphoserine modification. A Flavodoxin-like domain is found at 81-225 (IVVFYGSQTG…DFITWREQFW (145 aa)). FMN contacts are provided by residues 87–92 (SQTGTA), 139–142 (ATYG), 174–183 (LGNKTYEHFN), and D209. An FAD-binding FR-type domain is found at 280 to 522 (KNPFLATVTT…FVRKSQFRLP (243 aa)). R299 is a binding site for NADP(+). Residues R425, 455–458 (RYYS), 473–475 (CAV), Y479, and 489–492 (GVAT) each bind FAD. Residues T536, 597–598 (SR), 603–607 (KVYVQ), and D640 contribute to the NADP(+) site. Residue W678 participates in FAD binding.

The protein belongs to the NADPH--cytochrome P450 reductase family. This sequence in the N-terminal section; belongs to the flavodoxin family. In the C-terminal section; belongs to the flavoprotein pyridine nucleotide cytochrome reductase family. It depends on FAD as a cofactor. The cofactor is FMN.

The protein localises to the endoplasmic reticulum membrane. The enzyme catalyses 2 oxidized [cytochrome P450] + NADPH = 2 reduced [cytochrome P450] + NADP(+) + H(+). Functionally, this enzyme is required for electron transfer from NADP to cytochrome P450 in microsomes. It can also provide electron transfer to heme oxygenase and cytochrome B5. The protein is NADPH--cytochrome P450 reductase of Oryctolagus cuniculus (Rabbit).